Here is a 385-residue protein sequence, read N- to C-terminus: Mitochondrial fission regulator 2 (385 aa).

The residue at position 2 (Ser2) is an N-acetylserine. Phosphoserine is present on Ser119. Residues 195–268 (SVDPDQLPGS…SHHSKSQRNK (74 aa)) form a disordered region. The segment covering 207–216 (SPPPPPPLPP) has biased composition (pro residues). Residues 231-257 (PGSNNICDSDNPATEMSKQNPAANKTN) are compositionally biased toward polar residues. Phosphoserine is present on residues Ser291 and Ser328. The tract at residues 331–363 (KENRSWESSPFSSPETSRFGHHISQSEGQRTKE) is disordered. Over residues 336 to 346 (WESSPFSSPET) the composition is skewed to polar residues.

This sequence belongs to the MTFR1 family.

It localises to the mitochondrion. May play a role in mitochondrial aerobic respiration essentially in the testis. Can also promote mitochondrial fission. In Homo sapiens (Human), this protein is Mitochondrial fission regulator 2 (MTFR2).